The following is a 316-amino-acid chain: Transcription initiation factor IIB (316 aa).

A TFIIB-type zinc finger spans residues 7–38; the sequence is FRLRCPVCGSTDIVFNEETGEYVCARCGTIVL. Zn(2+) is bound by residues cysteine 11, cysteine 14, cysteine 30, and cysteine 33. The interval 51–73 is disordered; the sequence is FTPEERERRGRTGAPLSPTLHDH. 2 consecutive repeat copies span residues 124–207 and 218–299.

This sequence belongs to the TFIIB family.

In terms of biological role, stabilizes TBP binding to an archaeal box-A promoter. Also responsible for recruiting RNA polymerase II to the pre-initiation complex (DNA-TBP-TFIIB). The protein is Transcription initiation factor IIB of Ignicoccus hospitalis (strain KIN4/I / DSM 18386 / JCM 14125).